Reading from the N-terminus, the 403-residue chain is TBC1 domain family member 20 (403 aa).

Residues 1–29 (MALRSARGDGPTSGRWDGGAEKGDFNAKR) form a disordered region. Residues 18 to 27 (GGAEKGDFNA) show a composition bias toward basic and acidic residues. Residues 60-246 (LLTDEIRRKV…RLYDFFLACH (187 aa)) enclose the Rab-GAP TBC domain. The next 2 membrane-spanning stretches (helical) occupy residues 238 to 258 (LYDF…AVIV) and 367 to 387 (FVKL…LAVV).

Its subcellular location is the membrane. In terms of biological role, GTPase-activating protein (GAP) specific for Rab1 and Rab2 small GTPase families for which it can accelerate the intrinsic GTP hydrolysis rate by more than five orders of magnitude. Also shows GAP activity for RAB18 GTPase. Promotes RAB18 dissociation from the endoplasmic reticulum (ER) membrane into the cytosol, probably through stimulating RAB18 GTP-hydrolysis. Involved in maintaining endoplasmic reticulum structure. This is TBC1 domain family member 20 (TBC1D20) from Bos taurus (Bovine).